The sequence spans 636 residues: MNEWSIDDARAGYNVAHWSQGFYGISDEGEVTVSPDPKNPTFKIGLNALAKDMVKAGVSLPVLVRFPQILHHRVDHLCQMFNQAIQKYEYQSDYLLVYPIKVNQQQTVVEEILASQVSKTVPQLGLEAGSKPELMAVLAMAQKASSVIVCNGYKDKEYIRLALIGEKLGHSVYIVLEKMSELQMVLEESKKLGVTPRLGLRARLAFQGKGKWQASGGEKSKFGLSAAQILKVVERLKDEDMLESLQLLHFHLGSQIANIRDIRHGVGEAARFYCELRKLGAKVNCFDVGGGLAVDYDGTRSQSNNSMNYALAEYANNIVSVLTDVCNQNEQPMPRIISESGRYLTAHHAVLITDVIGTEAYSPEDIPAPEEEAPQLLHNMWRSWNEISSRLDQRALIEIFHDTQSDLAEAQSLFALGQLSLEDRAWAEQCNLAVCHELQGLMNARNRYQRPIIDELNEKLADRFFVNFSLFQSLPDAWGIDQVFPVLPLSGLDKVPERRAVMLDITCDSDGIVDQYVDGQGIETTLPVPNWSAEDPYLIGFFLVGAYQEILGDLHNLFGDTNSAVVRIDEEGQTNIESVLAGDTVADVLRYVNLDAVSFMRTYEELVNSHIAEDERAMILEELQVGLKGYTYLEDF.

At Lys-101 the chain carries N6-(pyridoxal phosphate)lysine. Phe-286–Tyr-296 serves as a coordination point for substrate.

The protein belongs to the Orn/Lys/Arg decarboxylase class-II family. SpeA subfamily. Requires Mg(2+) as cofactor. Pyridoxal 5'-phosphate serves as cofactor.

It catalyses the reaction L-arginine + H(+) = agmatine + CO2. It functions in the pathway amine and polyamine biosynthesis; agmatine biosynthesis; agmatine from L-arginine: step 1/1. Its function is as follows. Catalyzes the biosynthesis of agmatine from arginine. In Shewanella amazonensis (strain ATCC BAA-1098 / SB2B), this protein is Biosynthetic arginine decarboxylase.